Reading from the N-terminus, the 242-residue chain is Adenosine 5'-phosphosulfate reductase (242 aa).

Residues C125, C126, C208, and C211 each coordinate [4Fe-4S] cluster. C234 (nucleophile; cysteine thiosulfonate intermediate) is an active-site residue.

The protein belongs to the PAPS reductase family. CysH subfamily. It depends on [4Fe-4S] cluster as a cofactor.

It localises to the cytoplasm. It carries out the reaction [thioredoxin]-disulfide + sulfite + AMP + 2 H(+) = adenosine 5'-phosphosulfate + [thioredoxin]-dithiol. The protein operates within sulfur metabolism; hydrogen sulfide biosynthesis; sulfite from sulfate. Functionally, catalyzes the formation of sulfite from adenosine 5'-phosphosulfate (APS) using thioredoxin as an electron donor. The protein is Adenosine 5'-phosphosulfate reductase of Staphylococcus saprophyticus subsp. saprophyticus (strain ATCC 15305 / DSM 20229 / NCIMB 8711 / NCTC 7292 / S-41).